A 129-amino-acid polypeptide reads, in one-letter code: Protein Turandot A2 (129 aa).

The first 21 residues, 1-21 (MNSSTSLMCFALLLISPLCMG), serve as a signal peptide directing secretion. N49 carries N-linked (GlcNAc...) asparagine glycosylation.

This sequence belongs to the Turandot family.

It localises to the secreted. In terms of biological role, a humoral factor that plays a role in stress tolerance; gives increased resistance to the lethal effects of bacterial challenge and stress. Regulated by the JAK/STAT pathway and NF-KB-like Relish pathway in the fat body, upd3 in the hemocytes and Mekk1 in response to septic injury and consequent immune response. This is Protein Turandot A2 (TotA2) from Drosophila simulans (Fruit fly).